The sequence spans 545 residues: Spermatogenesis-associated serine-rich protein 2 (545 aa).

Positions 85–96 (GKKKNKKKKNKP) are enriched in basic residues. Positions 85 to 137 (GKKKNKKKKNKPKPAAEPSNGIPDSSKSVSIQEEQSAPSSEKGGMNGYHVNGA) are disordered. Over residues 106 to 123 (IPDSSKSVSIQEEQSAPS) the composition is skewed to polar residues. 3 positions are modified to phosphoserine: Ser-143, Ser-146, and Ser-148. Disordered regions lie at residues 197-216 (HNSQQPRNAAKSLSRPTTET) and 369-545 (GQVS…AVNS). Over residues 369 to 378 (GQVSHPKNSY) the composition is skewed to polar residues. 2 stretches are compositionally biased toward low complexity: residues 379-415 (STRSRCSSVTSVSLSSPSDASAASSSTCASPPSLTSA) and 475-490 (RYRNSSWYSSGSRYQS). The span at 491–514 (APSQAPGNTIERGQTHSAGTNGTG) shows a compositional bias: polar residues. A Phosphoserine modification is found at Ser-520.

Belongs to the SPATS2 family.

It is found in the cytoplasm. The sequence is that of Spermatogenesis-associated serine-rich protein 2 (SPATS2) from Homo sapiens (Human).